The chain runs to 297 residues: tRNA pseudouridine synthase B (297 aa).

Asp-44 acts as the Nucleophile in catalysis.

Belongs to the pseudouridine synthase TruB family. Type 1 subfamily.

It carries out the reaction uridine(55) in tRNA = pseudouridine(55) in tRNA. Its function is as follows. Responsible for synthesis of pseudouridine from uracil-55 in the psi GC loop of transfer RNAs. The polypeptide is tRNA pseudouridine synthase B (Corynebacterium aurimucosum (strain ATCC 700975 / DSM 44827 / CIP 107346 / CN-1) (Corynebacterium nigricans)).